A 199-amino-acid polypeptide reads, in one-letter code: Chaperone protein TorD (199 aa).

The protein belongs to the TorD/DmsD family. TorD subfamily.

The protein localises to the cytoplasm. Its function is as follows. Involved in the biogenesis of TorA. Acts on TorA before the insertion of the molybdenum cofactor and, as a result, probably favors a conformation of the apoenzyme that is competent for acquiring the cofactor. This is Chaperone protein TorD from Shigella dysenteriae serotype 1 (strain Sd197).